Here is a 157-residue protein sequence, read N- to C-terminus: Transcription elongation factor GreA (157 aa).

Belongs to the GreA/GreB family.

Necessary for efficient RNA polymerase transcription elongation past template-encoded arresting sites. The arresting sites in DNA have the property of trapping a certain fraction of elongating RNA polymerases that pass through, resulting in locked ternary complexes. Cleavage of the nascent transcript by cleavage factors such as GreA or GreB allows the resumption of elongation from the new 3'terminus. GreA releases sequences of 2 to 3 nucleotides. The polypeptide is Transcription elongation factor GreA (Hyphomonas neptunium (strain ATCC 15444)).